Here is a 99-residue protein sequence, read N- to C-terminus: Protein MOST-1 (99 aa).

In terms of assembly, interacts with TSPO, IGHM and IGHD. Expressed in the heart, kidney, liver, pancreas, small intestine, ovary, testis, prostate and thymus. Expressed in all of the cancer cell lines tested.

It localises to the cytoplasm. Its subcellular location is the microsome membrane. The protein resides in the endoplasmic reticulum membrane. Its function is as follows. May be involved in cell survival, proliferation and progression of cancer cells. The polypeptide is Protein MOST-1 (C8orf17) (Homo sapiens (Human)).